The chain runs to 250 residues: Hydroxyacylglutathione hydrolase (250 aa).

7 residues coordinate Zn(2+): His53, His55, Asp57, His58, His111, Asp128, and His166.

This sequence belongs to the metallo-beta-lactamase superfamily. Glyoxalase II family. Monomer. Zn(2+) is required as a cofactor.

The catalysed reaction is an S-(2-hydroxyacyl)glutathione + H2O = a 2-hydroxy carboxylate + glutathione + H(+). It functions in the pathway secondary metabolite metabolism; methylglyoxal degradation; (R)-lactate from methylglyoxal: step 2/2. Its function is as follows. Thiolesterase that catalyzes the hydrolysis of S-D-lactoyl-glutathione to form glutathione and D-lactic acid. The chain is Hydroxyacylglutathione hydrolase from Methylobacillus flagellatus (strain ATCC 51484 / DSM 6875 / VKM B-1610 / KT).